A 95-amino-acid chain; its full sequence is DNA-directed RNA polymerase subunit Rpo11 (95 aa).

The protein belongs to the archaeal Rpo11/eukaryotic RPB11/RPC19 RNA polymerase subunit family. As to quaternary structure, part of the RNA polymerase complex.

The protein resides in the cytoplasm. It carries out the reaction RNA(n) + a ribonucleoside 5'-triphosphate = RNA(n+1) + diphosphate. In terms of biological role, DNA-dependent RNA polymerase (RNAP) catalyzes the transcription of DNA into RNA using the four ribonucleoside triphosphates as substrates. The chain is DNA-directed RNA polymerase subunit Rpo11 from Pyrococcus abyssi (strain GE5 / Orsay).